The following is a 312-amino-acid chain: Malate dehydrogenase (312 aa).

Residues 12–17 (GAGFTG) and Asp-36 each bind NAD(+). Residues Arg-87 and Arg-93 each coordinate substrate. Residues Asn-100 and 123–125 (LTN) contribute to the NAD(+) site. Asn-125 lines the substrate pocket. Ser-149 is subject to Phosphoserine. Arg-156 lines the substrate pocket. The Proton acceptor role is filled by His-180.

It belongs to the LDH/MDH superfamily. MDH type 3 family. As to quaternary structure, homotetramer.

The enzyme catalyses (S)-malate + NAD(+) = oxaloacetate + NADH + H(+). Functionally, catalyzes the reversible oxidation of malate to oxaloacetate. This chain is Malate dehydrogenase, found in Bacillus israeli.